The chain runs to 56 residues: Small ribosomal subunit protein uS14 (56 aa).

Positions 21, 24, 39, and 42 each coordinate Zn(2+).

This sequence belongs to the universal ribosomal protein uS14 family. Zinc-binding uS14 subfamily. In terms of assembly, part of the 30S ribosomal subunit. Requires Zn(2+) as cofactor.

In terms of biological role, binds 16S rRNA, required for the assembly of 30S particles. The polypeptide is Small ribosomal subunit protein uS14 (Pyrococcus furiosus (strain ATCC 43587 / DSM 3638 / JCM 8422 / Vc1)).